The sequence spans 1324 residues: DNA-directed RNA polymerase subunit beta' (1324 aa).

Zn(2+)-binding residues include Cys219, Cys292, Cys299, and Cys302. The disordered stretch occupies residues 1293–1324 (ARDFEFASSDVEEDELTEEDDDYGDEEEEDAF). The segment covering 1302-1324 (DVEEDELTEEDDDYGDEEEEDAF) has biased composition (acidic residues).

Belongs to the RNA polymerase beta' chain family. RpoC2 subfamily. As to quaternary structure, in cyanobacteria the RNAP catalytic core is composed of 2 alpha, 1 beta, 1 beta', 1 gamma and 1 omega subunit. When a sigma factor is associated with the core the holoenzyme is formed, which can initiate transcription. Zn(2+) is required as a cofactor.

It catalyses the reaction RNA(n) + a ribonucleoside 5'-triphosphate = RNA(n+1) + diphosphate. DNA-dependent RNA polymerase catalyzes the transcription of DNA into RNA using the four ribonucleoside triphosphates as substrates. The polypeptide is DNA-directed RNA polymerase subunit beta' (Thermosynechococcus vestitus (strain NIES-2133 / IAM M-273 / BP-1)).